Reading from the N-terminus, the 555-residue chain is Xylulose kinase (555 aa).

Residues His88, Arg158, Asp274, and Asn275 each contribute to the substrate site. Residues Trp357, 455 to 456, and Asn459 each bind ATP; that span reads GA.

It belongs to the FGGY kinase family.

The protein resides in the cytoplasm. The enzyme catalyses D-xylulose + ATP = D-xylulose 5-phosphate + ADP + H(+). The sequence is that of Xylulose kinase from Schizosaccharomyces pombe (strain 972 / ATCC 24843) (Fission yeast).